A 361-amino-acid polypeptide reads, in one-letter code: Ankyrin repeat domain-containing protein 16 (361 aa).

ANK repeat units follow at residues 36-66 (AGDTLLHCAARHGRQDILAYLVEAWSMDIEA), 70-99 (DYKRPLHEAASMGHRDCVRYLLGRGAVVDS), 103-132 (ADWTPLMMACTRKNLDVIQDLVEHGANPLL), 136-165 (DGWNSFHIASREGHPVILRYLLTVCPDAWK), 170-200 (IRRTPLHTAAMHGCLEAVQVLLERCHYEPDC), 204-233 (CGVTPFMDAIQCGHVSIAKLLLEQHKACSS), 238-268 (MGAQALHRAAVTGQDEAIRFLVCGLGIDVDV), 273-302 (SQLTALHYAAKEGQTNTVQTLLSLGADINS), and 306-335 (RNRSVLHLACAGQHVACTRLLLQSGLKDSE).

As to quaternary structure, interacts with AARS; the interaction is direct. As to expression, widely expressed in brain (at protein level).

Its subcellular location is the cytoplasm. It is found in the nucleus. Functionally, required to prevent the misactivation of serine (Ser) with tRNA(Ala) by promoting the hydrolysis of Ser-mischarged tRNA(Ala), thereby playing a role in translational fidelity. Binds directly to the catalytic domain of AARS/AlaRS and captures Ser that is misactivated by AARS/AlaRS, preventing the charging of Ser adenylates to tRNA(Ala) and precluding Ser misincorporation in nascent peptides. In Mus musculus (Mouse), this protein is Ankyrin repeat domain-containing protein 16.